A 330-amino-acid polypeptide reads, in one-letter code: RNA/RNP complex-1-interacting phosphatase (330 aa).

Positions 1 to 12 (MSQWHHPRSGWG) are enriched in basic residues. The interval 1-32 (MSQWHHPRSGWGRRRDFSGRSSAKKKGGNHIP) is disordered. Residues 61 to 208 (FEKKLAPEEC…LQNGPIRKNW (148 aa)) enclose the Tyrosine-protein phosphatase domain. The active-site Phosphocysteine intermediate is the Cys-152. 153–158 (THGLNR) lines the substrate pocket. Catalysis depends on Arg-158, which acts as the Proton donor/acceptor.

Belongs to the protein-tyrosine phosphatase family. Non-receptor class dual specificity subfamily. As to quaternary structure, monomer. May interact with SFRS7 and SFRS9/SRP30C.

The protein resides in the nucleus. It localises to the nucleus speckle. In terms of biological role, possesses RNA 5'-triphosphatase and diphosphatase activities, but displays a poor protein-tyrosine phosphatase activity. In addition, has phosphatase activity with ATP, ADP and O-methylfluorescein phosphate (in vitro). Binds to RNA. May participate in nuclear mRNA metabolism. This Homo sapiens (Human) protein is RNA/RNP complex-1-interacting phosphatase.